The chain runs to 585 residues: MSEDHTKADNLSEKDPHSPERSDSSSHEDAHAREEEESSDDDGALDGKPASLIAIVMIALSLIGLQLAVFLSALDTTIVTVALPAISAHFNSTAAYTWVGSAYLLANAASTPIWGKLADIFGRKPMLLLANALFMIGSLVCALSINVGMLITARAIQGAAGGGLLTLVDTIIGDLFSLRTRGTYLGMIGGVWAIACALGPIVGGAFTSSVTWRWCFYINLPIDGLAFGIIFFFLKLKTPKTPILEGFAAIDWAGSFFIIGGTLMFLFGLQYGGITFPWDSATVICLLVFGVVCIVLFGLVEWKFARFPIIPLRLFQYRNNCGALLVAFFHSFVFTSAFYYLPLYFQAVKGATPILAGVYILPAVLSTGVSAAATGAFIGNTGNYLIPMYFGMSMMILGYGLLINFDAGSGWAKLIIYQLIAGIGNGPNFQAPLVALQTKIKQSDIATGTATFNFVRNIATAISVVAGQVLYQNQLKKMTSTLQQLGPAASLIAAGDAGANTQAINALPTPQRDLARSAIADALSPMWIMYTAFAAAGLFCILLVSKTELTTTHEVTEVGLEAQKKAEAERKAERQAKDLEKAQKS.

A compositionally biased stretch (basic and acidic residues) spans 1-34 (MSEDHTKADNLSEKDPHSPERSDSSSHEDAHARE). The tract at residues 1 to 45 (MSEDHTKADNLSEKDPHSPERSDSSSHEDAHAREEEESSDDDGAL) is disordered. Asn10 carries an N-linked (GlcNAc...) asparagine glycan. Residues 35–44 (EEESSDDDGA) show a composition bias toward acidic residues. The helical transmembrane segment at 51-71 (SLIAIVMIALSLIGLQLAVFL) threads the bilayer. A glycan (N-linked (GlcNAc...) asparagine) is linked at Asn91. 13 helical membrane-spanning segments follow: residues 94–114 (AAYT…TPIW), 132–152 (ALFM…MLIT), 158–178 (GAAG…LFSL), 186–206 (GMIG…GGAF), 214–234 (WCFY…FFFL), 247–267 (FAAI…MFLF), 280–300 (SATV…FGLV), 323–343 (ALLV…YLPL), 353–373 (PILA…SAAA), 385–405 (LIPM…LINF), 414–434 (LIIY…APLV), 449–471 (TATF…QVLY), and 524–544 (SPMW…ILLV). Residues 564–585 (KKAEAERKAERQAKDLEKAQKS) are disordered.

The protein belongs to the major facilitator superfamily. TCR/Tet family.

Its subcellular location is the cell membrane. The protein resides in the vacuole membrane. Efflux pump; part of the gene cluster that mediates the biosynthesis of dothistromin (DOTH), a polyketide toxin very similar in structure to the aflatoxin precursor, versicolorin B. One function of dotC may be to transport early-stage dothistromin biosynthetic intermediates from the cytoplasm into vacuoles, thereby affecting the rate of dothistromin production. The protein is Efflux pump dotC of Dothistroma septosporum (Red band needle blight fungus).